The primary structure comprises 79 residues: Ferredoxin (79 aa).

4Fe-4S ferredoxin-type domains lie at 2–30 and 31–60; these read PHVI…YDGG and DQFY…PEED. 2 residues coordinate [3Fe-4S] cluster: Cys9 and Cys17. Cys21, Cys40, Cys43, and Cys46 together coordinate [4Fe-4S] cluster. Cys50 contributes to the [3Fe-4S] cluster binding site.

[4Fe-4S] cluster is required as a cofactor. Requires [3Fe-4S] cluster as cofactor.

Its function is as follows. Ferredoxins are iron-sulfur proteins that transfer electrons in a wide variety of metabolic reactions. This chain is Ferredoxin, found in Thermus thermophilus (strain ATCC 27634 / DSM 579 / HB8).